A 555-amino-acid chain; its full sequence is Urocanate hydratase (555 aa).

Residues 52 to 53 (GG), glutamine 130, 176 to 178 (GMG), glutamate 196, arginine 201, 242 to 243 (NA), 263 to 267 (QTSAH), 273 to 274 (YL), and tyrosine 322 contribute to the NAD(+) site. Residue cysteine 410 is part of the active site. Glycine 492 serves as a coordination point for NAD(+).

This sequence belongs to the urocanase family. Requires NAD(+) as cofactor.

Its subcellular location is the cytoplasm. The enzyme catalyses 4-imidazolone-5-propanoate = trans-urocanate + H2O. It participates in amino-acid degradation; L-histidine degradation into L-glutamate; N-formimidoyl-L-glutamate from L-histidine: step 2/3. Functionally, catalyzes the conversion of urocanate to 4-imidazolone-5-propionate. This is Urocanate hydratase from Shewanella baltica (strain OS195).